The sequence spans 118 residues: MLIPKEDRKKIHQYLFQEGVVVAKKDFNQPKHDEIDTRNLFVIKALQSLTSKGYVKTQFSWQYYYYTLTDEGVEFLRTELNIPEGILPLTRLKNAPAERPRPSRGGPRRGGYRGRARD.

The interval 91 to 118 (RLKNAPAERPRPSRGGPRRGGYRGRARD) is disordered. Residues 106 to 118 (GPRRGGYRGRARD) are compositionally biased toward basic residues.

It belongs to the eukaryotic ribosomal protein eS10 family. In terms of assembly, component of the small ribosomal subunit. Mature ribosomes consist of a small (40S) and a large (60S) subunit. The 40S subunit contains about 32 different proteins and 1 molecule of RNA (18S). The 60S subunit contains 45 different proteins and 3 molecules of RNA (25S, 5.8S and 5S).

Its subcellular location is the cytoplasm. In terms of biological role, component of the ribosome, a large ribonucleoprotein complex responsible for the synthesis of proteins in the cell. The small ribosomal subunit (SSU) binds messenger RNAs (mRNAs) and translates the encoded message by selecting cognate aminoacyl-transfer RNA (tRNA) molecules. The large subunit (LSU) contains the ribosomal catalytic site termed the peptidyl transferase center (PTC), which catalyzes the formation of peptide bonds, thereby polymerizing the amino acids delivered by tRNAs into a polypeptide chain. The nascent polypeptides leave the ribosome through a tunnel in the LSU and interact with protein factors that function in enzymatic processing, targeting, and the membrane insertion of nascent chains at the exit of the ribosomal tunnel. This Candida albicans (strain SC5314 / ATCC MYA-2876) (Yeast) protein is Small ribosomal subunit protein eS10 (RPS10).